We begin with the raw amino-acid sequence, 214 residues long: UPF0301 protein NFA_55110 (214 aa).

A disordered region spans residues 1–24 (MARADDPDERKTQGGHGDRRRREF).

This sequence belongs to the UPF0301 (AlgH) family.

This chain is UPF0301 protein NFA_55110, found in Nocardia farcinica (strain IFM 10152).